We begin with the raw amino-acid sequence, 334 residues long: Deoxyhypusine synthase (334 aa).

Residues 73 to 77 (SNIIS), 99 to 101 (TGG), E105, and D207 contribute to the NAD(+) site. 104–105 (EE) is a binding site for spermidine. Positions 212 and 256 each coordinate spermidine. 276-277 (NA) contributes to the NAD(+) binding site. Spermidine contacts are provided by residues 282–284 (GSD) and 291–297 (EAVSWGK). K297 serves as the catalytic Nucleophile. Residue 310–311 (DA) coordinates NAD(+).

It belongs to the deoxyhypusine synthase family. NAD(+) is required as a cofactor.

The enzyme catalyses [eIF5A protein]-L-lysine + spermidine = [eIF5A protein]-deoxyhypusine + propane-1,3-diamine. It participates in protein modification; eIF5A hypusination. Functionally, catalyzes the NAD-dependent oxidative cleavage of spermidine and the subsequent transfer of the butylamine moiety of spermidine to the epsilon-amino group of a specific lysine residue of the eIF-5A precursor protein to form the intermediate deoxyhypusine residue. In Encephalitozoon cuniculi (strain GB-M1) (Microsporidian parasite), this protein is Deoxyhypusine synthase (DYS1).